A 204-amino-acid polypeptide reads, in one-letter code: Bcl-2-like protein 10 (204 aa).

The short motif at 86 to 105 (LSDSPGPTWGRVVTLVTFAG) is the BH1 element. The segment at 118-133 (WKKWGFQPRLKEQEGD) is required for Ca(2+) binding. Glycyl lysine isopeptide (Lys-Gly) (interchain with G-Cter in ubiquitin) cross-links involve residues K119, K120, and K128. Positions 156–167 (WLQAQGGWDGFC) match the BH2 motif. The helical transmembrane segment at 183 to 200 (LVQAFLSCLLTTAFIYLW) threads the bilayer.

The protein belongs to the Bcl-2 family. Interacts with BAX. Interacts with BCL2 and BCL2L1/BCLX. Interacts with APAF1. Interacts with ITPR1, ITPR2 and ITPR3; the interaction with ITPR1 is increased in the presence of AHCLY1. Interacts with AHCYL1. Interacts with HIP1R (via ENTH and I/LWEQ domains). Interacts with CASP9. Interacts with BCL2L11/BIM. Interacts with BIK. Interacts with UBQLN4. Interacts with NME2/NM23-H2. Interacts with PMAIP1/NOXA. Interacts with TPX2. Interacts with UBQLN1; in the cytoplasm. Interacts (via BH1 domain) with BECN1. The cofactor is Ca(2+). In terms of processing, monoubiquitinated by UBQLN1; results in stabilization of BCL2L10 protein abundance and in relocalization from mitochondria to cytoplasm. As to expression, widely expressed in adult tissues. Preferentially expressed in lung, liver and kidney.

The protein localises to the mitochondrion. Its subcellular location is the nucleus membrane. It localises to the endoplasmic reticulum. The protein resides in the cytoplasm. It is found in the cytoskeleton. The protein localises to the spindle. In terms of biological role, promotes cell survival by suppressing apoptosis induced by BAX but not BAK. Increases binding of AHCYL1/IRBIT to ITPR1. Reduces ITPR1-mediated calcium release from the endoplasmic reticulum cooperatively with AHCYL1/IRBIT under normal cellular conditions. Under apoptotic stress conditions, dissociates from ITPR1 and is displaced from mitochondria-associated endoplasmic reticulum membranes, leading to increased Ca(2+) transfer to mitochondria which promotes apoptosis. Required for the correct formation of the microtubule organizing center during oocyte cell division, potentially via regulation of protein abundance and localization of other microtubule organizing center components such as AURKA and TPX2. The sequence is that of Bcl-2-like protein 10 from Homo sapiens (Human).